A 414-amino-acid polypeptide reads, in one-letter code: Protein PHLOEM PROTEIN 2-LIKE A10 (414 aa).

Transmembrane regions (helical) follow at residues 20-40 and 379-399; these read WLIFMAISGVSGYGAYKVYHL and YVGAKSSVIITVCLALYLHII.

The protein resides in the membrane. This Arabidopsis thaliana (Mouse-ear cress) protein is Protein PHLOEM PROTEIN 2-LIKE A10 (PP2A10).